A 318-amino-acid polypeptide reads, in one-letter code: tRNA-dihydrouridine(16) synthase (318 aa).

FMN is bound by residues 7 to 9 (PME) and Gln-68. Cys-98 serves as the catalytic Proton donor. FMN contacts are provided by residues Lys-139, 200–202 (NGE), and 224–225 (CR).

The protein belongs to the Dus family. DusC subfamily. FMN is required as a cofactor.

The catalysed reaction is 5,6-dihydrouridine(16) in tRNA + NADP(+) = uridine(16) in tRNA + NADPH + H(+). It catalyses the reaction 5,6-dihydrouridine(16) in tRNA + NAD(+) = uridine(16) in tRNA + NADH + H(+). Catalyzes the synthesis of 5,6-dihydrouridine (D), a modified base found in the D-loop of most tRNAs, via the reduction of the C5-C6 double bond in target uridines. Specifically modifies U16 in tRNAs. The chain is tRNA-dihydrouridine(16) synthase from Vibrio vulnificus (strain CMCP6).